A 314-amino-acid polypeptide reads, in one-letter code: Ribosomal RNA small subunit methyltransferase H (314 aa).

S-adenosyl-L-methionine is bound by residues 34 to 36, D54, F83, D104, and Q111; that span reads GGH.

It belongs to the methyltransferase superfamily. RsmH family.

The protein localises to the cytoplasm. The catalysed reaction is cytidine(1402) in 16S rRNA + S-adenosyl-L-methionine = N(4)-methylcytidine(1402) in 16S rRNA + S-adenosyl-L-homocysteine + H(+). Functionally, specifically methylates the N4 position of cytidine in position 1402 (C1402) of 16S rRNA. In Ligilactobacillus salivarius (strain UCC118) (Lactobacillus salivarius), this protein is Ribosomal RNA small subunit methyltransferase H.